The primary structure comprises 673 residues: Methionine--tRNA ligase (673 aa).

The short motif at 15–25 (PYANGPIHLGH) is the 'HIGH' region element. Zn(2+) is bound by residues C146, C149, C159, and C162. The short motif at 332–336 (KMSKS) is the 'KMSKS' region element. K335 serves as a coordination point for ATP. The 102-residue stretch at 572 to 673 (DFAKLDLRIA…EGAQPGMRVK (102 aa)) folds into the tRNA-binding domain.

It belongs to the class-I aminoacyl-tRNA synthetase family. MetG type 1 subfamily. Homodimer. Zn(2+) serves as cofactor.

The protein resides in the cytoplasm. It carries out the reaction tRNA(Met) + L-methionine + ATP = L-methionyl-tRNA(Met) + AMP + diphosphate. Functionally, is required not only for elongation of protein synthesis but also for the initiation of all mRNA translation through initiator tRNA(fMet) aminoacylation. The chain is Methionine--tRNA ligase from Shewanella loihica (strain ATCC BAA-1088 / PV-4).